Here is a 201-residue protein sequence, read N- to C-terminus: Recombination protein RecR (201 aa).

A C4-type zinc finger spans residues 60–75; sequence CSCCGNVDTSDPCTIC. In terms of domain architecture, Toprim spans 83–178; the sequence is ATLIVVEDVS…RVTRLAHGVP (96 aa).

This sequence belongs to the RecR family.

Its function is as follows. May play a role in DNA repair. It seems to be involved in an RecBC-independent recombinational process of DNA repair. It may act with RecF and RecO. This Brucella abortus biovar 1 (strain 9-941) protein is Recombination protein RecR.